We begin with the raw amino-acid sequence, 307 residues long: Ornithine carbamoyltransferase (307 aa).

Residues 50-53, Gln-77, Arg-101, and 128-131 contribute to the carbamoyl phosphate site; these read STRT and HPCQ. Residues Asn-160, Asp-224, and 228 to 229 contribute to the L-ornithine site; that span reads SM. Carbamoyl phosphate is bound by residues 264-265 and Arg-292; that span reads CL.

It belongs to the aspartate/ornithine carbamoyltransferase superfamily. OTCase family.

It is found in the cytoplasm. It catalyses the reaction carbamoyl phosphate + L-ornithine = L-citrulline + phosphate + H(+). Its pathway is amino-acid biosynthesis; L-arginine biosynthesis; L-arginine from L-ornithine and carbamoyl phosphate: step 1/3. Functionally, reversibly catalyzes the transfer of the carbamoyl group from carbamoyl phosphate (CP) to the N(epsilon) atom of ornithine (ORN) to produce L-citrulline. This is Ornithine carbamoyltransferase from Clavibacter michiganensis subsp. michiganensis (strain NCPPB 382).